Here is a 125-residue protein sequence, read N- to C-terminus: Protein ApaG (125 aa).

One can recognise an ApaG domain in the interval 1–125; that stretch reads MINSPRVCVQ…FRLAIPSLIN (125 aa).

This is Protein ApaG from Sodalis glossinidius (strain morsitans).